A 466-amino-acid chain; its full sequence is Ribulose bisphosphate carboxylase large chain (466 aa).

Lys-4 carries the N6,N6,N6-trimethyllysine modification. Positions 113 and 163 each coordinate substrate. Lys-165 functions as the Proton acceptor in the catalytic mechanism. Lys-167 is a substrate binding site. Residues Lys-191, Asp-193, and Glu-194 each coordinate Mg(2+). Lys-191 is subject to N6-carboxylysine. The Proton acceptor role is filled by His-284. 3 residues coordinate substrate: Arg-285, His-317, and Ser-369.

This sequence belongs to the RuBisCO large chain family. Type I subfamily. As to quaternary structure, heterohexadecamer of 8 large chains and 8 small chains; disulfide-linked. The disulfide link is formed within the large subunit homodimers. Mg(2+) serves as cofactor. The disulfide bond which can form in the large chain dimeric partners within the hexadecamer appears to be associated with oxidative stress and protein turnover.

The protein resides in the plastid. It localises to the chloroplast. It catalyses the reaction 2 (2R)-3-phosphoglycerate + 2 H(+) = D-ribulose 1,5-bisphosphate + CO2 + H2O. The enzyme catalyses D-ribulose 1,5-bisphosphate + O2 = 2-phosphoglycolate + (2R)-3-phosphoglycerate + 2 H(+). RuBisCO catalyzes two reactions: the carboxylation of D-ribulose 1,5-bisphosphate, the primary event in carbon dioxide fixation, as well as the oxidative fragmentation of the pentose substrate in the photorespiration process. Both reactions occur simultaneously and in competition at the same active site. This Aphelandra sinclairiana (Orange shrimp plant) protein is Ribulose bisphosphate carboxylase large chain.